The primary structure comprises 162 residues: uncharacterized protein (162 aa).

3 helical membrane passes run 28 to 50 (ALALALLPRSSLLWYLLFAVCFF), 57 to 76 (LLLLSLVLFGFVVPSFDPWL), and 108 to 130 (YNTMIAGGLVAGALCYLPCYALA).

Its subcellular location is the cell membrane. This is an uncharacterized protein from Treponema pallidum (strain Nichols).